We begin with the raw amino-acid sequence, 766 residues long: DNA ligase (766 aa).

The disordered stretch occupies residues 1–30 (MSTVNAKGAKPATDANGQSLNPEEPSEALR). NAD(+) contacts are provided by residues 57–61 (DAEYD), 106–107 (SL), and E141. K143 functions as the N6-AMP-lysine intermediate in the catalytic mechanism. The NAD(+) site is built by R164, E201, K317, and K341. Zn(2+) is bound by residues C435, C438, C454, and C460. In terms of domain architecture, BRCT spans 669–758 (STPRTLEGVT…PEAFGDRADA (90 aa)). Positions 747-766 (QGPEAFGDRADAADQPAAGE) are disordered.

It belongs to the NAD-dependent DNA ligase family. LigA subfamily. It depends on Mg(2+) as a cofactor. The cofactor is Mn(2+).

The enzyme catalyses NAD(+) + (deoxyribonucleotide)n-3'-hydroxyl + 5'-phospho-(deoxyribonucleotide)m = (deoxyribonucleotide)n+m + AMP + beta-nicotinamide D-nucleotide.. DNA ligase that catalyzes the formation of phosphodiester linkages between 5'-phosphoryl and 3'-hydroxyl groups in double-stranded DNA using NAD as a coenzyme and as the energy source for the reaction. It is essential for DNA replication and repair of damaged DNA. In Kocuria rhizophila (strain ATCC 9341 / DSM 348 / NBRC 103217 / DC2201), this protein is DNA ligase.